A 645-amino-acid polypeptide reads, in one-letter code: Glucans biosynthesis glucosyltransferase H (645 aa).

Over residues 1–12 the composition is skewed to polar residues; the sequence is MDGTVTLSSTPT. Positions 1–22 are disordered; the sequence is MDGTVTLSSTPTAIPPVSALDA. Transmembrane regions (helical) follow at residues 64–84, 98–118, 423–443, 465–485, 504–524, 559–579, and 580–600; these read LIGG…SVLW, LFTL…AGFV, APMW…GVGI, AIWI…LGYI, AVSI…VMYL, YGGL…VSPA, and LAAW…VVAL.

It belongs to the glycosyltransferase 2 family. OpgH subfamily.

The protein localises to the cell inner membrane. The protein operates within glycan metabolism; osmoregulated periplasmic glucan (OPG) biosynthesis. In terms of biological role, involved in the biosynthesis of osmoregulated periplasmic glucans (OPGs). The protein is Glucans biosynthesis glucosyltransferase H of Xanthomonas oryzae pv. oryzae (strain MAFF 311018).